The chain runs to 132 residues: Small ribosomal subunit protein uS8c (132 aa).

This sequence belongs to the universal ribosomal protein uS8 family. In terms of assembly, part of the 30S ribosomal subunit.

It is found in the plastid. The protein localises to the chloroplast. Its function is as follows. One of the primary rRNA binding proteins, it binds directly to 16S rRNA central domain where it helps coordinate assembly of the platform of the 30S subunit. The polypeptide is Small ribosomal subunit protein uS8c (rps8) (Illicium oligandrum (Star anise)).